Consider the following 36-residue polypeptide: Potassium channel toxin alpha-KTx 1.9 (36 aa).

Belongs to the short scorpion toxin superfamily. Potassium channel inhibitor family. Alpha-KTx 01 subfamily. As to expression, expressed by the venom gland.

It is found in the secreted. In terms of biological role, potent selective inhibitor of Kv1/KCNA voltage-gated potassium channels. The polypeptide is Potassium channel toxin alpha-KTx 1.9 (Centruroides limbatus (Bark scorpion)).